Consider the following 902-residue polypeptide: Leucine-rich repeat-containing G-protein coupled receptor 5A (902 aa).

The signal sequence occupies residues 1 to 22; it reads MDTSRTSLFLCSVLYSLQLVGS. At 23–557 the chain is on the extracellular side; it reads ARPGKQHRSC…DHLFGSWLTR (535 aa). Intrachain disulfides connect Cys-32–Cys-38 and Cys-36–Cys-49. The 30-residue stretch at 32–61 folds into the LRRNT domain; sequence CPTPCECEQDGMLVRVDCSDRGLTGLPRNI. LRR repeat units follow at residues 41–61, 62–85, 86–109, 111–133, 134–157, 159–181, 182–205, 207–229, 230–253, 254–276, 278–300, 301–324, 325–347, 348–372, 374–393, 394–417, and 418–441; these read DGMLVRVDCSDRGLTGLPRNI, SIFTSYLDLSMNNITKLPSNALHN, LHFLEELRLAGNDLTYIPKGAFAG, GSLKVLMLQNNLLRQVPSEALQN, LRSLQSLRLDANHISYVPPSSFNG, FSLRHLWLDDNSLTEIPVRALES, LSALQAMTLALNKIHHIPDYAFGN, SSLVVLHLHNNRIYSLGKKCFDG, LHSLETLDLNYNNLDEFPAAIKTL, KNLKELGFHSNNIKSIPEQAFIG, PSLITTHFYDNPIQHVGRSAFQH, LPELRTLILNGASQITEFPDLTGT, TSLESLTLTGAQLVYLPSAVCNQ, LPNLKVIDLSYNHIKDLPSFSGCQR, QKIDLRHNEVYEIRFTTFQQ, LVGLRSLDLAWNKIAVIHPSSFSS, and LPSLIKLDLSSNHLTSFPVTGLHG. N-linked (GlcNAc...) asparagine glycosylation is found at Asn-60 and Asn-74. An N-linked (GlcNAc...) asparagine glycan is attached at Asn-205. Cysteines 345 and 370 form a disulfide. Residues Cys-476 and Cys-537 are joined by a disulfide bond. Asn-496 carries an N-linked (GlcNAc...) asparagine glycan. A helical membrane pass occupies residues 558–578; the sequence is IGVWLIVLLSFVCNALVIATV. Over 579–589 the chain is Cytoplasmic; sequence FRPLSYVPSIK. Residues 590–610 traverse the membrane as a helical segment; the sequence is LLIGLIAIINTLMGLSSGVLA. One copy of the LRR 18 repeat lies at 598 to 619; the sequence is INTLMGLSSGVLATVDALTFGN. Topologically, residues 611 to 634 are extracellular; the sequence is TVDALTFGNFAQYGAWWESGVGCQ. Cys-633 and Cys-708 are disulfide-bonded. Residues 635–655 traverse the membrane as a helical segment; the sequence is ITGFLSVFAAETSVFLLTVAA. Residues 656 to 678 lie on the Cytoplasmic side of the membrane; that stretch reads LERGFSIKCTTKFETKSSFLSVK. The chain crosses the membrane as a helical span at residues 679–699; the sequence is LSIVFCFLLSIIIAVSPLMSG. The Extracellular portion of the chain corresponds to 700 to 718; it reads STYGTSPFCFPLLFGDPSS. The helical transmembrane segment at 719–739 threads the bilayer; it reads MVFMVALVLLNSLCFLVMTVA. The Cytoplasmic segment spans residues 740–763; the sequence is YTKLYCSLEKGELENVWDCSMVKH. A helical transmembrane segment spans residues 764 to 784; the sequence is IALLLFTNCILYCPVAFLSFS. The Extracellular segment spans residues 785-798; sequence SLLNLTFISPEVNK. Asn-788 and Asn-797 each carry an N-linked (GlcNAc...) asparagine glycan. The helical transmembrane segment at 799 to 819 threads the bilayer; sequence SILLLIIPLPACLNPLLYILF. Topologically, residues 820-902 are cytoplasmic; sequence NPHFKEDIGS…LSAVAFVPCH (83 aa).

The protein belongs to the G-protein coupled receptor 1 family. As to expression, expressed in the developing epithelial stem cells of the intestine.

It localises to the cell membrane. The protein resides in the golgi apparatus. Its subcellular location is the trans-Golgi network membrane. Its function is as follows. Receptor for R-spondins that potentiates the canonical Wnt signaling pathway and acts as a stem cell marker of the intestinal epithelium and the hair follicle. Upon binding to R-spondins (RSPO1, RSPO2, RSPO3 or RSPO4), associates with phosphorylated LRP6 and frizzled receptors that are activated by extracellular Wnt receptors, triggering the canonical Wnt signaling pathway to increase expression of target genes. In contrast to classical G-protein coupled receptors, does not activate heterotrimeric G-proteins to transduce the signal. Involved in the development and/or maintenance of the adult intestinal stem cells during postembryonic development. This chain is Leucine-rich repeat-containing G-protein coupled receptor 5A (lgr5-a), found in Xenopus laevis (African clawed frog).